The primary structure comprises 272 residues: Dermonecrotic toxin LvSicTox-alphaIC1aiii (272 aa).

The active site involves H4. Positions 24 and 26 each coordinate Mg(2+). H40 serves as the catalytic Nucleophile. 2 disulfides stabilise this stretch: C44-C50 and C46-C189. D84 contributes to the Mg(2+) binding site.

The protein belongs to the arthropod phospholipase D family. Class II subfamily. The cofactor is Mg(2+). In terms of tissue distribution, expressed by the venom gland.

Its subcellular location is the secreted. It catalyses the reaction an N-(acyl)-sphingosylphosphocholine = an N-(acyl)-sphingosyl-1,3-cyclic phosphate + choline. The enzyme catalyses an N-(acyl)-sphingosylphosphoethanolamine = an N-(acyl)-sphingosyl-1,3-cyclic phosphate + ethanolamine. It carries out the reaction a 1-acyl-sn-glycero-3-phosphocholine = a 1-acyl-sn-glycero-2,3-cyclic phosphate + choline. The catalysed reaction is a 1-acyl-sn-glycero-3-phosphoethanolamine = a 1-acyl-sn-glycero-2,3-cyclic phosphate + ethanolamine. Functionally, dermonecrotic toxins cleave the phosphodiester linkage between the phosphate and headgroup of certain phospholipids (sphingolipid and lysolipid substrates), forming an alcohol (often choline) and a cyclic phosphate. This toxin acts on sphingomyelin (SM). It may also act on ceramide phosphoethanolamine (CPE), lysophosphatidylcholine (LPC) and lysophosphatidylethanolamine (LPE), but not on lysophosphatidylserine (LPS), and lysophosphatidylglycerol (LPG). It acts by transphosphatidylation, releasing exclusively cyclic phosphate products as second products. Induces dermonecrosis, hemolysis, increased vascular permeability, edema, inflammatory response, and platelet aggregation. This is Dermonecrotic toxin LvSicTox-alphaIC1aiii from Loxosceles variegata (Recluse spider).